The following is a 1036-amino-acid chain: PDZ domain-containing RING finger protein 4 (1036 aa).

The RING-type; degenerate zinc-finger motif lies at 18 to 56 (CKLCGQVLEEPLCTPCGHVFCASCLLPWAVRRRRCPLQC). The span at 129 to 160 (ARGGCGPTPRAGRGGGARGGPPGGRWGRGRGP) shows a compositional bias: gly residues. The disordered stretch occupies residues 129–161 (ARGGCGPTPRAGRGGGARGGPPGGRWGRGRGPG). PDZ domains lie at 224–314 (TIVL…LRRT) and 402–486 (EVEL…VARP). The disordered stretch occupies residues 515–590 (HNEAMQPTAN…SLKSKRDLGQ (76 aa)). Residues 548-566 (NHEKDSGVGRTDESLRNDE) show a composition bias toward basic and acidic residues. Residues 655 to 689 (NQGEQEGVEHELQLLNEELRNIELECQNIMQAHRL) are a coiled coil. A compositionally biased stretch (basic and acidic residues) spans 726–735 (EHPEKSDKDS). Positions 726 to 819 (EHPEKSDKDS…VLEGSKLPDQ (94 aa)) are disordered. A compositionally biased stretch (polar residues) spans 736–750 (SSAYNTAESCRSTPL). Low complexity predominate over residues 774-799 (STMAATQSSSGQSSKESTSTKAKTTE). Positions 805 to 819 (ESKEKVLEGSKLPDQ) are enriched in basic and acidic residues.

This Homo sapiens (Human) protein is PDZ domain-containing RING finger protein 4 (PDZRN4).